A 254-amino-acid chain; its full sequence is L-erythrulose-1-phosphate isomerase (254 aa).

The active-site Electrophile is H97. E170 functions as the Proton acceptor in the catalytic mechanism. The substrate site is built by G176 and S213.

Belongs to the triosephosphate isomerase family. As to quaternary structure, homodimer.

The protein localises to the cytoplasm. It carries out the reaction L-erythrulose 1-phosphate = D-erythrulose 4-phosphate. It functions in the pathway carbohydrate metabolism; erythritol degradation. In terms of biological role, catalyzes the isomerization of D-erythrulose-4P to L-erythrulose-1P. The protein is L-erythrulose-1-phosphate isomerase of Mesorhizobium japonicum (strain LMG 29417 / CECT 9101 / MAFF 303099) (Mesorhizobium loti (strain MAFF 303099)).